The chain runs to 407 residues: Serine/threonine transporter SstT (407 aa).

9 consecutive transmembrane segments (helical) span residues 14 to 34 (GSLV…ATVS), 48 to 68 (FVGA…AASI), 82 to 102 (IVIL…LMSF), 141 to 161 (AVLT…GLAL), 192 to 212 (IGIF…AIAG), 216 to 236 (LLLV…PAIV), 290 to 310 (IPLG…ILTL), 316 to 336 (MGIQ…GVSA), and 363 to 383 (VAMQ…SAET).

It belongs to the dicarboxylate/amino acid:cation symporter (DAACS) (TC 2.A.23) family.

Its subcellular location is the cell inner membrane. The catalysed reaction is L-serine(in) + Na(+)(in) = L-serine(out) + Na(+)(out). It catalyses the reaction L-threonine(in) + Na(+)(in) = L-threonine(out) + Na(+)(out). Involved in the import of serine and threonine into the cell, with the concomitant import of sodium (symport system). The sequence is that of Serine/threonine transporter SstT from Shewanella halifaxensis (strain HAW-EB4).